A 411-amino-acid polypeptide reads, in one-letter code: MTAQTPIHVYSEIGKLKKVLLHRPGKEIENLMPDYLERLLFDDIPFLEDAQKEHDAFAQALRDEGVEVLYLETLAAESLVTPEIREAFIDEYLSEANIRGRATKKAIRELLMSIEDNQELIEKTMAGVQKSELPEIPAAEKGLTDLVESSYPFAIDPMPNLYFTRDPFATIGTGVSLNHMFSETRNRETIYGKYIFTHHPIYGGGKVPMVYDRNETTRIEGGDELVLSKDVLAVGISQRTDAASIEKLLVNIFKQNLGFKKVLAFEFANNRKFMHLDTVFTMVDYDKFTIHPEIEGDLRVYSVTYENEALRIVEEKGDLAELLAANLGVEKVELIRCGGDNLVAAGREQWNDGSNTLTIAPGVVVVYNRNTITNAILESKGLKLIKIHGSELVRGRGGPRCMSMPFEREDI.

The active-site Amidino-cysteine intermediate is C401.

This sequence belongs to the arginine deiminase family.

Its subcellular location is the cytoplasm. It carries out the reaction L-arginine + H2O = L-citrulline + NH4(+). The protein operates within amino-acid degradation; L-arginine degradation via ADI pathway; carbamoyl phosphate from L-arginine: step 1/2. The sequence is that of Arginine deiminase from Streptococcus equi subsp. zooepidemicus (strain MGCS10565).